Consider the following 559-residue polypeptide: NAD(P)H-quinone oxidoreductase chain 4-2 (559 aa).

The next 14 helical transmembrane spans lie at Phe-5–Ile-25, Trp-35–Asn-55, Ile-86–Trp-106, Leu-114–Asp-134, Leu-136–Trp-156, Phe-168–Phe-188, Ile-207–Ile-227, Ser-242–Ile-262, Val-274–Ser-294, Val-310–Gly-330, Ala-331–Val-351, Val-374–Phe-394, Val-417–Leu-437, and Val-488–Ala-508.

This sequence belongs to the complex I subunit 4 family.

It localises to the cellular thylakoid membrane. The enzyme catalyses a plastoquinone + NADH + (n+1) H(+)(in) = a plastoquinol + NAD(+) + n H(+)(out). The catalysed reaction is a plastoquinone + NADPH + (n+1) H(+)(in) = a plastoquinol + NADP(+) + n H(+)(out). NDH-1 shuttles electrons from NAD(P)H, via FMN and iron-sulfur (Fe-S) centers, to quinones in the respiratory chain. The immediate electron acceptor for the enzyme in this species is believed to be plastoquinone. Couples the redox reaction to proton translocation (for every two electrons transferred, four hydrogen ions are translocated across the cytoplasmic membrane), and thus conserves the redox energy in a proton gradient. The protein is NAD(P)H-quinone oxidoreductase chain 4-2 (ndhD2) of Synechocystis sp. (strain ATCC 27184 / PCC 6803 / Kazusa).